A 229-amino-acid polypeptide reads, in one-letter code: Enolase-phosphatase E1 (229 aa).

Belongs to the HAD-like hydrolase superfamily. MasA/MtnC family. Monomer. Requires Mg(2+) as cofactor.

It catalyses the reaction 5-methylsulfanyl-2,3-dioxopentyl phosphate + H2O = 1,2-dihydroxy-5-(methylsulfanyl)pent-1-en-3-one + phosphate. It functions in the pathway amino-acid biosynthesis; L-methionine biosynthesis via salvage pathway; L-methionine from S-methyl-5-thio-alpha-D-ribose 1-phosphate: step 3/6. The protein operates within amino-acid biosynthesis; L-methionine biosynthesis via salvage pathway; L-methionine from S-methyl-5-thio-alpha-D-ribose 1-phosphate: step 4/6. Its function is as follows. Bifunctional enzyme that catalyzes the enolization of 2,3-diketo-5-methylthiopentyl-1-phosphate (DK-MTP-1-P) into the intermediate 2-hydroxy-3-keto-5-methylthiopentenyl-1-phosphate (HK-MTPenyl-1-P), which is then dephosphorylated to form the acireductone 1,2-dihydroxy-3-keto-5-methylthiopentene (DHK-MTPene). This Yersinia enterocolitica serotype O:8 / biotype 1B (strain NCTC 13174 / 8081) protein is Enolase-phosphatase E1.